The sequence spans 210 residues: Imidazole glycerol phosphate synthase subunit HisH (210 aa).

In terms of domain architecture, Glutamine amidotransferase type-1 spans 3–210 (KVALLDYGSG…QLLRNWIDLL (208 aa)). The active-site Nucleophile is the Cys81. Catalysis depends on residues His191 and Glu193.

Heterodimer of HisH and HisF.

It is found in the cytoplasm. It catalyses the reaction 5-[(5-phospho-1-deoxy-D-ribulos-1-ylimino)methylamino]-1-(5-phospho-beta-D-ribosyl)imidazole-4-carboxamide + L-glutamine = D-erythro-1-(imidazol-4-yl)glycerol 3-phosphate + 5-amino-1-(5-phospho-beta-D-ribosyl)imidazole-4-carboxamide + L-glutamate + H(+). The catalysed reaction is L-glutamine + H2O = L-glutamate + NH4(+). Its pathway is amino-acid biosynthesis; L-histidine biosynthesis; L-histidine from 5-phospho-alpha-D-ribose 1-diphosphate: step 5/9. Functionally, IGPS catalyzes the conversion of PRFAR and glutamine to IGP, AICAR and glutamate. The HisH subunit catalyzes the hydrolysis of glutamine to glutamate and ammonia as part of the synthesis of IGP and AICAR. The resulting ammonia molecule is channeled to the active site of HisF. This is Imidazole glycerol phosphate synthase subunit HisH from Corynebacterium diphtheriae (strain ATCC 700971 / NCTC 13129 / Biotype gravis).